Consider the following 377-residue polypeptide: MFNLLKPFYPLVLTAAKSNPEGAHLQLLNTLNTLERTHHTRGGNWLLSQLDQSFCVDDSRLKQTLWGLTFNNPVGLAAGCDKEGIAAGIWSHLGFGFAELGAVTLHPQPGNPRPRLFRLPHDKAVLNRLGANNQGAEIMAQTLAEIWQRSPRNIPIGINLCKSKITPLDEAAQDYVGSFSYLENQADYFVVNVSSPNTPGLRSLQEGEQLNSILQALQAANQHQKPLFVKISPDLEEEAILTIIELAQTHCLAGIIATNTTIKRDRLTTQILPETGNKIQEEAGGISGLPIRDRSTEIIGFIYQKTQGKLPIIGVGGIFTPDDAWNKIIAGASLLQLYTGWIYQGPWIIPDIVRGLGDKLKQLGLSHISQAVGINHK.

FMN contacts are provided by residues 78–82 and Ala-102; that span reads AGCDK. Lys-82 contacts substrate. 127-130 is a binding site for substrate; it reads NRLG. FMN is bound by residues Asn-159 and Asn-192. Asn-192 provides a ligand contact to substrate. Residue Ser-195 is the Nucleophile of the active site. Residue Asn-197 coordinates substrate. Lys-230 and Thr-258 together coordinate FMN. 259 to 260 serves as a coordination point for substrate; the sequence is NT. FMN is bound by residues Gly-288, Gly-317, and 338-339; that span reads YT.

The protein belongs to the dihydroorotate dehydrogenase family. Type 2 subfamily. In terms of assembly, monomer. FMN serves as cofactor.

The protein localises to the cell membrane. It catalyses the reaction (S)-dihydroorotate + a quinone = orotate + a quinol. The protein operates within pyrimidine metabolism; UMP biosynthesis via de novo pathway; orotate from (S)-dihydroorotate (quinone route): step 1/1. Catalyzes the conversion of dihydroorotate to orotate with quinone as electron acceptor. The protein is Dihydroorotate dehydrogenase (quinone) of Rippkaea orientalis (strain PCC 8801 / RF-1) (Cyanothece sp. (strain PCC 8801)).